Consider the following 72-residue polypeptide: Translation initiation factor IF-1 (72 aa).

The 72-residue stretch at 1-72 (MAKEGAIEVE…TRGRIVYRYK (72 aa)) folds into the S1-like domain.

This sequence belongs to the IF-1 family. As to quaternary structure, component of the 30S ribosomal translation pre-initiation complex which assembles on the 30S ribosome in the order IF-2 and IF-3, IF-1 and N-formylmethionyl-tRNA(fMet); mRNA recruitment can occur at any time during PIC assembly.

It localises to the cytoplasm. In terms of biological role, one of the essential components for the initiation of protein synthesis. Stabilizes the binding of IF-2 and IF-3 on the 30S subunit to which N-formylmethionyl-tRNA(fMet) subsequently binds. Helps modulate mRNA selection, yielding the 30S pre-initiation complex (PIC). Upon addition of the 50S ribosomal subunit IF-1, IF-2 and IF-3 are released leaving the mature 70S translation initiation complex. The protein is Translation initiation factor IF-1 of Corynebacterium efficiens (strain DSM 44549 / YS-314 / AJ 12310 / JCM 11189 / NBRC 100395).